A 901-amino-acid chain; its full sequence is HTH-type transcriptional regulator MalT (901 aa).

39–46 (SPAGYGKT) serves as a coordination point for ATP. One can recognise an HTH luxR-type domain in the interval 829 to 894 (ELIRTSPLTQ…DAVQHAQQLL (66 aa)). Residues 853–872 (NEQIAGELAVAATTIKTHIR) constitute a DNA-binding region (H-T-H motif).

This sequence belongs to the MalT family. In terms of assembly, monomer in solution. Oligomerizes to an active state in the presence of the positive effectors ATP and maltotriose.

Its activity is regulated as follows. Activated by ATP and maltotriose, which are both required for DNA binding. Its function is as follows. Positively regulates the transcription of the maltose regulon whose gene products are responsible for uptake and catabolism of malto-oligosaccharides. Specifically binds to the promoter region of its target genes, recognizing a short DNA motif called the MalT box. The polypeptide is HTH-type transcriptional regulator MalT (Salmonella typhimurium (strain LT2 / SGSC1412 / ATCC 700720)).